Reading from the N-terminus, the 150-residue chain is U1 small nuclear ribonucleoprotein C (150 aa).

A Matrin-type zinc finger spans residues 4–36 (YYCDYCKSYLTHDTMSVRKSHLQGRNHIKFYCD). The tract at residues 66 to 127 (SDAKKSNGSS…PPNLSGLPLP (62 aa)) is disordered. The segment covering 80–92 (DIDKKENSSDHNK) has biased composition (basic and acidic residues). Acidic residues predominate over residues 103–112 (NDNDDDDDEM).

This sequence belongs to the U1 small nuclear ribonucleoprotein C family. U1 snRNP is composed of the 7 core Sm proteins B/B', D1, D2, D3, E, F and G that assemble in a heptameric protein ring on the Sm site of the small nuclear RNA to form the core snRNP, and at least 3 U1 snRNP-specific proteins U1-70K, U1-A and U1-C. U1-C interacts with U1 snRNA and the 5' splice-site region of the pre-mRNA.

Its subcellular location is the nucleus. Functionally, component of the spliceosomal U1 snRNP, which is essential for recognition of the pre-mRNA 5' splice-site and the subsequent assembly of the spliceosome. U1-C is directly involved in initial 5' splice-site recognition for both constitutive and regulated alternative splicing. The interaction with the 5' splice-site seems to precede base-pairing between the pre-mRNA and the U1 snRNA. Stimulates commitment or early (E) complex formation by stabilizing the base pairing of the 5' end of the U1 snRNA and the 5' splice-site region. The polypeptide is U1 small nuclear ribonucleoprotein C (Candida albicans (strain WO-1) (Yeast)).